A 500-amino-acid polypeptide reads, in one-letter code: NAD(P)H-quinone oxidoreductase chain 4, chloroplastic (500 aa).

Transmembrane regions (helical) follow at residues 4–24 (FPWL…MLFL), 35–55 (YTIC…CYNF), 87–107 (IGTI…AFPV), 113–130 (LFHF…GSFS), 134–154 (LLLF…LLAM), 167–187 (FILY…GLSL), 211–231 (ILFY…IPLH), 242–262 (HYST…YGLV), 272–292 (AHSM…IYAA), 305–325 (IAYS…SITD), 330–350 (GAIL…FLAG), 386–406 (LALP…GIIT), 416–436 (ILII…LLSM), and 462–482 (LFLS…PDFV).

Belongs to the complex I subunit 4 family.

It localises to the plastid. It is found in the chloroplast thylakoid membrane. It catalyses the reaction a plastoquinone + NADH + (n+1) H(+)(in) = a plastoquinol + NAD(+) + n H(+)(out). It carries out the reaction a plastoquinone + NADPH + (n+1) H(+)(in) = a plastoquinol + NADP(+) + n H(+)(out). The sequence is that of NAD(P)H-quinone oxidoreductase chain 4, chloroplastic from Lepidium virginicum (Virginia pepperweed).